A 69-amino-acid chain; its full sequence is Guanine nucleotide-binding protein G(I)/G(S)/G(O) subunit gamma-T2 (69 aa).

Cys66 bears the Cysteine methyl ester mark. A lipid anchor (S-farnesyl cysteine) is attached at Cys66. A propeptide spans 67-69 (VLS) (removed in mature form).

The protein belongs to the G protein gamma family. In terms of assembly, g proteins are composed of 3 units, alpha, beta and gamma.

The protein resides in the cell membrane. In terms of biological role, guanine nucleotide-binding proteins (G proteins) are involved as a modulator or transducer in various transmembrane signaling systems. The beta and gamma chains are required for the GTPase activity, for replacement of GDP by GTP, and for G protein-effector interaction. This is Guanine nucleotide-binding protein G(I)/G(S)/G(O) subunit gamma-T2 (Gngt2) from Mus musculus (Mouse).